A 257-amino-acid polypeptide reads, in one-letter code: ABC transporter ATP-binding protein YxdL (257 aa).

Residues 5–243 enclose the ABC transporter domain; that stretch reads LEVKHINKTY…FYEQILDVLS (239 aa). 40–47 contributes to the ATP binding site; sequence GPSGSGKT.

The protein belongs to the ABC transporter superfamily. In terms of assembly, the complex is composed of two ATP-binding proteins (YxdL) and two transmembrane proteins (YxdM).

Its function is as follows. Part of the ABC transporter complex YxdLM which could be involved in peptide resistance. Responsible for energy coupling to the transport system. This chain is ABC transporter ATP-binding protein YxdL (yxdL), found in Bacillus subtilis (strain 168).